A 643-amino-acid polypeptide reads, in one-letter code: MSYQVLARKWRPQTFADVVGQEHVLTALANGLSLGRIHHAYLFSGTRGVGKTSIARLLAKGLNCETGITATPCGVCDNCREIEQGRFVDLIEIDAASRTKVEDTRDLLDNVQYAPARGRFKVYLIDEVHMLSRHSFNALLKTLEEPPEHVKFLLATTDPQKLPVTILSRCLQFHLKALDVEQIRHQLEHILNEEHIAHEPRALQLLARAAEGSLRDALSLTDQAIASGDGQVSTQAVSAMLGTLDDDQALSLVEAMVEANGERVMALINEAAARGIEWEALLVEMLGLLHRIAMVQLSPAALGNDMAAIELRMRELARTIPPTDIQLYYQTLLIGRKELPYAPDRRMGVEMTLLRALAFHPRMPLPEPEVPRQSFAPVAPTAVMTPTQVPPQPQSAPQQAPTVPLPETTSQVLAARQQLQRVQGATKAKKSEPAAATRARPVNNAALERLASVTDRVQARPVPSALEKAPAKKEAYRWKATTPVMQQKEVVATPKALKKALEHEKTPELAAKLAAEAIERDPWAAQVSQLSLPKLVEQVALNAWKEESDNAVCLHLRSSQRHLNNRGAQQKLAEALSMLKGSTVELTIVEDDNPAVRTPLEWRQAIYEEKLAQARESIIADNNIQTLRRFFDAELDEESIRPI.

45–52 is an ATP binding site; sequence GTRGVGKT. The Zn(2+) site is built by cysteine 64, cysteine 73, cysteine 76, and cysteine 79. Positions 385–404 are disordered; the sequence is TPTQVPPQPQSAPQQAPTVP.

Belongs to the DnaX/STICHEL family. In terms of assembly, the DNA polymerase III holoenzyme complex contains at least 10 different subunits organized into 3 functionally essential subassemblies: the Pol III core, the beta sliding clamp processivity factor and the clamp-loading complex. The Pol III core (subunits alpha, epsilon and theta) contains the polymerase and the 3'-5' exonuclease proofreading activities. The polymerase is tethered to the template via the dimeric beta sliding clamp processivity factor. The clamp-loading complex (also called gamma complex) assembles the beta sliding clamp onto the primed template and plays a central role in the organization and communication at the replication fork. The clamp-loading complex contains delta, delta', psi and chi, and 3 copies of either or both of two different DnaX proteins, gamma and tau. The DNA replisome complex has a single clamp loader (3 tau and 1 each of delta, delta', psi and chi subunits) which binds 3 Pol III cores (1 core on the leading strand and 2 on the lagging strand) each with a beta sliding clamp dimer. Additional proteins in the replisome are other copies of gamma, psi and chi, Ssb, DNA helicase and RNA primase. The clamp loader hydrolyzes ATP to assemble the beta processivity factor onto the primed template and plays a central role in the organization and communication at the replication fork; the minimal complex to load the beta sliding clamp on DNA is delta, delta', gamma.

The enzyme catalyses DNA(n) + a 2'-deoxyribonucleoside 5'-triphosphate = DNA(n+1) + diphosphate. Functionally, part of the beta sliding clamp loading complex, which hydrolyzes ATP to load the beta clamp onto primed DNA to form the DNA replication pre-initiation complex. DNA polymerase III is a complex, multichain enzyme responsible for most of the replicative synthesis in bacteria. This DNA polymerase also exhibits 3'-5' exonuclease activity. The gamma complex (gamma(3),delta,delta') is thought to load beta dimers onto DNA by binding ATP which alters the complex's conformation so it can bind beta sliding clamp dimers and open them at one interface. Primed DNA is recognized, ATP is hydrolyzed releasing the gamma complex and closing the beta sliding clamp ring around the primed DNA. In terms of biological role, serves as a scaffold to trimerize the core complex. Interacts with the delta and delta' subunits to transfer the beta subunit on the DNA. Interacts with ATP, drives ATP-induced conformational changes in the gamma complex that opens the beta sliding clamp ring. After loading of primed DNA ATP is hydrolyzed and the beta sliding clamp ring closes. This Escherichia coli (strain K12) protein is DNA polymerase III subunit tau (dnaX).